Reading from the N-terminus, the 211-residue chain is N-(5'-phosphoribosyl)anthranilate isomerase (211 aa).

The protein belongs to the TrpF family.

The catalysed reaction is N-(5-phospho-beta-D-ribosyl)anthranilate = 1-(2-carboxyphenylamino)-1-deoxy-D-ribulose 5-phosphate. The protein operates within amino-acid biosynthesis; L-tryptophan biosynthesis; L-tryptophan from chorismate: step 3/5. The sequence is that of N-(5'-phosphoribosyl)anthranilate isomerase from Methanococcus maripaludis (strain DSM 14266 / JCM 13030 / NBRC 101832 / S2 / LL).